The primary structure comprises 305 residues: Probable cell division protein WhiA (305 aa).

The H-T-H motif DNA-binding region spans 269–302 (TIKELGELLDPPLGKSGVNHRLRKLVERSNDLKK).

It belongs to the WhiA family.

Its function is as follows. Involved in cell division and chromosome segregation. This chain is Probable cell division protein WhiA, found in Lactococcus lactis subsp. cremoris (strain MG1363).